The chain runs to 378 residues: Ribosomal RNA large subunit methyltransferase G (378 aa).

This sequence belongs to the methyltransferase superfamily. RlmG family.

Its subcellular location is the cytoplasm. The catalysed reaction is guanosine(1835) in 23S rRNA + S-adenosyl-L-methionine = N(2)-methylguanosine(1835) in 23S rRNA + S-adenosyl-L-homocysteine + H(+). Functionally, specifically methylates the guanine in position 1835 (m2G1835) of 23S rRNA. The polypeptide is Ribosomal RNA large subunit methyltransferase G (Enterobacter sp. (strain 638)).